The chain runs to 176 residues: Conjugal transfer protein TraF (176 aa).

The first 24 residues, 1–24, serve as a signal peptide directing secretion; the sequence is MSKRAVIRFLGVAGLVLSGATVMG.

It belongs to the peptidase S26C family.

The protein resides in the periplasm. Its function is as follows. Involved in conjugal transfer of the plasmid. The chain is Conjugal transfer protein TraF (traF) from Agrobacterium fabrum (strain C58 / ATCC 33970) (Agrobacterium tumefaciens (strain C58)).